A 247-amino-acid polypeptide reads, in one-letter code: Large ribosomal subunit protein uL3 (247 aa).

Disordered regions lie at residues 140-164 (SHRS…KMPG) and 212-247 (LPKE…KEGA). An N5-methylglutamine modification is found at Q151. The span at 232–247 (DEDKAPADTPAEKEGA) shows a compositional bias: basic and acidic residues.

This sequence belongs to the universal ribosomal protein uL3 family. As to quaternary structure, part of the 50S ribosomal subunit. Forms a cluster with proteins L14 and L19. Post-translationally, methylated by PrmB.

Functionally, one of the primary rRNA binding proteins, it binds directly near the 3'-end of the 23S rRNA, where it nucleates assembly of the 50S subunit. The sequence is that of Large ribosomal subunit protein uL3 from Nitrobacter winogradskyi (strain ATCC 25391 / DSM 10237 / CIP 104748 / NCIMB 11846 / Nb-255).